Here is a 224-residue protein sequence, read N- to C-terminus: Deoxyribose-phosphate aldolase (224 aa).

The active-site Proton donor/acceptor is the aspartate 94. The active-site Schiff-base intermediate with acetaldehyde is the lysine 158. The Proton donor/acceptor role is filled by lysine 187.

The protein belongs to the DeoC/FbaB aldolase family. DeoC type 1 subfamily. In terms of assembly, homodimer.

The protein localises to the cytoplasm. It catalyses the reaction 2-deoxy-D-ribose 5-phosphate = D-glyceraldehyde 3-phosphate + acetaldehyde. With respect to regulation, activated by citrate. Inhibited by NaBH(4). Activity is independent of divalent metal cations. Catalyzes a reversible aldol reaction between acetaldehyde and D-glyceraldehyde 3-phosphate to generate 2-deoxy-D-ribose 5-phosphate. Could be involved in pentose biosynthesis. The protein is Deoxyribose-phosphate aldolase of Thermococcus kodakarensis (strain ATCC BAA-918 / JCM 12380 / KOD1) (Pyrococcus kodakaraensis (strain KOD1)).